The primary structure comprises 460 residues: Putative protein p41 (460 aa).

In terms of domain architecture, Helicase ATP-binding spans Ile-14 to Gly-186.

This Escherichia coli (Bacteriophage APSE-1) protein is Putative protein p41 (41).